The following is a 347-amino-acid chain: Lipopolysaccharide core heptosyltransferase OpsX (347 aa).

The protein belongs to the glycosyltransferase 9 family.

It participates in bacterial outer membrane biogenesis; LPS core biosynthesis. Functionally, catalyzes heptose transfer to the lipopolysaccharide core. It transfers the first L-glycero-D-manno-heptose to the phosphorylated 3-deoxy-alpha-D-manno-octulosonic acid (Kdo-P) of the inner core. This chain is Lipopolysaccharide core heptosyltransferase OpsX, found in Haemophilus influenzae (strain ATCC 51907 / DSM 11121 / KW20 / Rd).